A 527-amino-acid polypeptide reads, in one-letter code: DNA damage-binding protein cmr1 (527 aa).

A disordered region spans residues 35–90; that stretch reads AGLFPPKSARSSPGGLTKPKKKPAPKKVKKEDEDLVPRRMSSRLRGLAADSEVAKR. Over residues 52 to 62 the composition is skewed to basic residues; that stretch reads KPKKKPAPKKV. 7 WD repeats span residues 185–226, 249–289, 296–336, 341–381, 388–427, 450–493, and 496–527; these read LTPE…PISA, PHTR…SVEK, SDDI…RSAV, LSEK…HDEP, VSRL…AAWK, GRWV…LAQL, and DGIT…CLWM. Residues 284–303 are disordered; it reads TTSVEKYAPESTSDDIPISG.

It belongs to the WD repeat DDB2/WDR76 family.

In terms of biological role, DNA-binding protein that binds to both single- and double-stranded DNA. Binds preferentially to UV-damaged DNA. May be involved in DNA-metabolic processes. In Neosartorya fischeri (strain ATCC 1020 / DSM 3700 / CBS 544.65 / FGSC A1164 / JCM 1740 / NRRL 181 / WB 181) (Aspergillus fischerianus), this protein is DNA damage-binding protein cmr1.